Consider the following 128-residue polypeptide: Glycine cleavage system H protein (128 aa).

Residues 23–105 enclose the Lipoyl-binding domain; the sequence is KVRIGITDFA…YEKAWMIVVE (83 aa). K64 carries the post-translational modification N6-lipoyllysine.

The protein belongs to the GcvH family. The glycine cleavage system is composed of four proteins: P, T, L and H. Requires (R)-lipoate as cofactor.

In terms of biological role, the glycine cleavage system catalyzes the degradation of glycine. The H protein shuttles the methylamine group of glycine from the P protein to the T protein. Is also involved in protein lipoylation via its role as an octanoyl/lipoyl carrier protein intermediate. The chain is Glycine cleavage system H protein from Halalkalibacterium halodurans (strain ATCC BAA-125 / DSM 18197 / FERM 7344 / JCM 9153 / C-125) (Bacillus halodurans).